The sequence spans 171 residues: Adenine phosphoribosyltransferase (171 aa).

Belongs to the purine/pyrimidine phosphoribosyltransferase family. As to quaternary structure, homodimer.

The protein resides in the cytoplasm. The enzyme catalyses AMP + diphosphate = 5-phospho-alpha-D-ribose 1-diphosphate + adenine. It participates in purine metabolism; AMP biosynthesis via salvage pathway; AMP from adenine: step 1/1. Catalyzes a salvage reaction resulting in the formation of AMP, that is energically less costly than de novo synthesis. The protein is Adenine phosphoribosyltransferase of Geotalea daltonii (strain DSM 22248 / JCM 15807 / FRC-32) (Geobacter daltonii).